The chain runs to 387 residues: Putative gustatory receptor 22d (387 aa).

Residues 1-43 lie on the Cytoplasmic side of the membrane; that stretch reads MFRPRCGLRQKFVYVILKSILYSSWLLGIFPFKYEPKKRRLRR. Residues 44–64 traverse the membrane as a helical segment; sequence SMWLILFGVVISSSLLILMVK. At 65–82 the chain is on the extracellular side; that stretch reads QSAEDREHGIMLDVFQRN. A helical membrane pass occupies residues 83 to 103; that stretch reads ALLYQISSLMGVVGVVSICTV. The Cytoplasmic segment spans residues 104-142; that stretch reads HLRTLWRSKHLEEIYNGLMLLEAKYFCSNAVECPAFDGY. Residues 143-163 form a helical membrane-spanning segment; that stretch reads VIQKGVVIVVGLLAPWMVHFG. At 164 to 184 the chain is on the extracellular side; it reads MPDSKLPVLNVLVVSMVKLGT. The chain crosses the membrane as a helical span at residues 185-205; sequence LLLALHYHLGVVIIYRFVWLI. At 206–252 the chain is on the cytoplasmic side; the sequence is NRELLSLVCSLRGNHKGSSSRVRFLLKLYNKLVNLYSKLADCYDCQT. A helical transmembrane segment spans residues 253–273; it reads VLMMAIFLAANIIVCFYMIVY. At 274–281 the chain is on the extracellular side; sequence RISLSKMS. Residues 282–302 traverse the membrane as a helical segment; it reads FFVMLIMFPLAIANNFMDFWL. Residues 303-363 lie on the Cytoplasmic side of the membrane; it reads SMKVCDLLQK…HCGLFHVNRE (61 aa). The helical transmembrane segment at 364–384 threads the bilayer; it reads MGFKMFVASVLYLLYLVQFDY. At 385–387 the chain is on the extracellular side; sequence MNL.

This sequence belongs to the insect chemoreceptor superfamily. Gustatory receptor (GR) family. Gr22e subfamily. Expressed in neurons of the dorsal pharyngeal sense organs of larvae.

The protein localises to the cell membrane. In terms of biological role, probable gustatory receptor which mediates acceptance or avoidance behavior, depending on its substrates. This chain is Putative gustatory receptor 22d, found in Drosophila melanogaster (Fruit fly).